The following is a 332-amino-acid chain: Glycerol-3-phosphate dehydrogenase [NAD(P)+] (332 aa).

The NADPH site is built by tryptophan 13, arginine 33, and lysine 107. Residues lysine 107, glycine 136, and serine 138 each coordinate sn-glycerol 3-phosphate. Alanine 140 is a binding site for NADPH. Sn-glycerol 3-phosphate contacts are provided by lysine 191, aspartate 244, serine 254, arginine 255, and asparagine 256. Lysine 191 acts as the Proton acceptor in catalysis. Residue arginine 255 coordinates NADPH. Glutamate 280 is a binding site for NADPH.

It belongs to the NAD-dependent glycerol-3-phosphate dehydrogenase family.

It localises to the cytoplasm. It carries out the reaction sn-glycerol 3-phosphate + NAD(+) = dihydroxyacetone phosphate + NADH + H(+). The enzyme catalyses sn-glycerol 3-phosphate + NADP(+) = dihydroxyacetone phosphate + NADPH + H(+). It functions in the pathway membrane lipid metabolism; glycerophospholipid metabolism. Catalyzes the reduction of the glycolytic intermediate dihydroxyacetone phosphate (DHAP) to sn-glycerol 3-phosphate (G3P), the key precursor for phospholipid synthesis. This Alkalilimnicola ehrlichii (strain ATCC BAA-1101 / DSM 17681 / MLHE-1) protein is Glycerol-3-phosphate dehydrogenase [NAD(P)+].